A 456-amino-acid polypeptide reads, in one-letter code: MGRPIVAIIGRPNVGKSTLVNRLCGSREAIVDDQPGVTRDRTYQDAFWADREFKVVDTGGLVFDDESEFLPEIRQQAKLALSEASVALIVVDGQEGVTTADKEIASWLRHCECPTLVAVNKCESPEQGLAMAADFWSLGLGEPYPVSAIHGSGTGELLDQVILLLPSKESSEEEDEPIQLAIIGRPNVGKSSLLNSICGETRAIVSSIRGTTRDTIDTLLKREQQAWKLIDTAGIRRRRSVSYGPEYFGINRSLKAIERSDVCLLVIDALDGVTEQDQRLAGRIEQEGKACLVVVNKWDAVEKDTYTMPLMEKELRSKLYFLDWADMLFTSALTGQRVQLIFNLASLAVEQHRRRVSTSVVNEVLSEALTWRSPPTTRGGRQGRLYYGTQVSTQPPSFSLFVNEPKLFGDSYRRYIERQLREGLGFEGTPLKLFWRGKQQRAAQKDLARQKENLSK.

2 consecutive EngA-type G domains span residues 4-169 (PIVA…PSKE) and 178-353 (IQLA…EQHR). Residues 10–17 (GRPNVGKS), 57–61 (DTGGL), 120–123 (NKCE), 184–191 (GRPNVGKS), 231–235 (DTAGI), and 296–299 (NKWD) each bind GTP. Positions 354 to 439 (RRVSTSVVNE…PLKLFWRGKQ (86 aa)) constitute a KH-like domain.

Belongs to the TRAFAC class TrmE-Era-EngA-EngB-Septin-like GTPase superfamily. EngA (Der) GTPase family. As to quaternary structure, associates with the 50S ribosomal subunit.

GTPase that plays an essential role in the late steps of ribosome biogenesis. This Prochlorococcus marinus (strain MIT 9211) protein is GTPase Der.